The sequence spans 210 residues: Superoxide dismutase [Mn], mitochondrial (210 aa).

Residues His-29, His-77, Asp-164, and His-168 each contribute to the Mn(2+) site.

It belongs to the iron/manganese superoxide dismutase family. Homotetramer. The cofactor is Mn(2+).

The protein resides in the mitochondrion matrix. The catalysed reaction is 2 superoxide + 2 H(+) = H2O2 + O2. Its function is as follows. Destroys superoxide anion radicals which are normally produced within the cells and which are toxic to biological systems. This Aspergillus oryzae (strain ATCC 42149 / RIB 40) (Yellow koji mold) protein is Superoxide dismutase [Mn], mitochondrial (sodB).